Reading from the N-terminus, the 357-residue chain is bZIP transcription factor 23 (357 aa).

Residues Pro-166–Pro-185 form a disordered region. In terms of domain architecture, bZIP spans Val-275–Arg-338. The segment at Arg-277 to Lys-296 is basic motif. Residues Leu-303 to Leu-317 are leucine-zipper.

This sequence belongs to the bZIP family. ABI5 subfamily. In terms of tissue distribution, highly expressed in leaves.

Its subcellular location is the nucleus. Functionally, transcriptional activator that mediates abscisic acid (ABA) signaling. Can regulate the expression of a wide spectrum of stress-related genes in response to abiotic stresses through an ABA-dependent regulation pathway. Confers ABA-dependent drought and salinity tolerance. Binds specifically to the ABA-responsive elements (ABRE) in the promoter of target genes to mediate stress-responsive ABA signaling. The sequence is that of bZIP transcription factor 23 from Oryza sativa subsp. japonica (Rice).